A 235-amino-acid polypeptide reads, in one-letter code: Glucosamine-6-phosphate deaminase (235 aa).

Aspartate 62 acts as the Proton acceptor; for enolization step in catalysis. The For ring-opening step role is filled by asparagine 128. Catalysis depends on histidine 130, which acts as the Proton acceptor; for ring-opening step. The active-site For ring-opening step is the glutamate 135.

Belongs to the glucosamine/galactosamine-6-phosphate isomerase family. NagB subfamily.

It catalyses the reaction alpha-D-glucosamine 6-phosphate + H2O = beta-D-fructose 6-phosphate + NH4(+). It functions in the pathway amino-sugar metabolism; N-acetylneuraminate degradation; D-fructose 6-phosphate from N-acetylneuraminate: step 5/5. Functionally, catalyzes the reversible isomerization-deamination of glucosamine 6-phosphate (GlcN6P) to form fructose 6-phosphate (Fru6P) and ammonium ion. This is Glucosamine-6-phosphate deaminase from Lactococcus lactis subsp. cremoris (strain SK11).